The primary structure comprises 236 residues: Small ribosomal subunit protein uS3 (236 aa).

The KH type-2 domain occupies 39 to 107; it reads IRKFLKREMY…EVFINIKEAK (69 aa). A compositionally biased stretch (basic and acidic residues) spans 214–229; the sequence is PEKKEESKSGDKEVRS. The tract at residues 214 to 236 is disordered; sequence PEKKEESKSGDKEVRSKSRRGRQ.

Belongs to the universal ribosomal protein uS3 family. Part of the 30S ribosomal subunit. Forms a tight complex with proteins S10 and S14.

Binds the lower part of the 30S subunit head. Binds mRNA in the 70S ribosome, positioning it for translation. The sequence is that of Small ribosomal subunit protein uS3 from Helicobacter hepaticus (strain ATCC 51449 / 3B1).